The chain runs to 121 residues: Phosphoribosyl-ATP pyrophosphatase (121 aa).

This sequence belongs to the PRA-PH family.

Its subcellular location is the cytoplasm. The enzyme catalyses 1-(5-phospho-beta-D-ribosyl)-ATP + H2O = 1-(5-phospho-beta-D-ribosyl)-5'-AMP + diphosphate + H(+). It participates in amino-acid biosynthesis; L-histidine biosynthesis; L-histidine from 5-phospho-alpha-D-ribose 1-diphosphate: step 2/9. This is Phosphoribosyl-ATP pyrophosphatase from Burkholderia cenocepacia (strain ATCC BAA-245 / DSM 16553 / LMG 16656 / NCTC 13227 / J2315 / CF5610) (Burkholderia cepacia (strain J2315)).